The following is a 281-amino-acid chain: HTH-type transcriptional activator RhaR (281 aa).

The HTH araC/xylS-type domain maps to 178-276 (DKLLAALAAS…GMSPGQWRQR (99 aa)). 2 consecutive DNA-binding regions (H-T-H motif) follow at residues 195–216 (ERFC…RQQT) and 243–266 (IGDI…SREI).

Binds DNA as a dimer.

The protein resides in the cytoplasm. Activates expression of the rhaSR operon in response to L-rhamnose. The sequence is that of HTH-type transcriptional activator RhaR from Klebsiella pneumoniae subsp. pneumoniae (strain ATCC 700721 / MGH 78578).